Reading from the N-terminus, the 2070-residue chain is HEAT repeat-containing protein 5B (2070 aa).

HEAT repeat units lie at residues 848–885 (EVRKSALTLVMGALDNPNPILRCAAGEALGRMAQVVGE), 1062–1099 (VNLSSLVPSLCVHLCSSHLLLRRAAVACLRQLAQREAA), and 1290–1327 (LHLSDLIRMAFMAATDHSNQLRMAGLQALEDIIKKFAS). Serine 1737 is modified (phosphoserine).

It belongs to the HEATR5 family. In terms of assembly, self-associates. Component of the aftiphilin/p200/gamma-synergin complex, at least composed of AFTPH/aftiphilin, HEATR5B/p200a and SYNRG/gamma-synergin, which plays a role in the AP1G1/AP-1-mediated protein trafficking from early to recycling endosomes and between the trans-Golgi network (TGN) and endosomes. Within the complex interacts with AFTPH/aftiphilin and SYNRG/gamma-synergin; the interactions are direct. Interacts with GGA1.

The protein resides in the cytoplasm. It is found in the perinuclear region. The protein localises to the cytoplasmic vesicle. Its subcellular location is the clathrin-coated vesicle. In terms of biological role, component of clathrin-coated vesicles. Component of the aftiphilin/p200/gamma-synergin complex, which plays roles in AP1G1/AP-1-mediated protein trafficking including the trafficking of transferrin from early to recycling endosomes, and the membrane trafficking of furin and the lysosomal enzyme cathepsin D between the trans-Golgi network (TGN) and endosomes. The polypeptide is HEAT repeat-containing protein 5B (Heatr5b) (Mus musculus (Mouse)).